Consider the following 274-residue polypeptide: 3-deoxy-manno-octulosonate cytidylyltransferase (274 aa).

The protein belongs to the KdsB family.

The protein resides in the cytoplasm. It catalyses the reaction 3-deoxy-alpha-D-manno-oct-2-ulosonate + CTP = CMP-3-deoxy-beta-D-manno-octulosonate + diphosphate. It functions in the pathway nucleotide-sugar biosynthesis; CMP-3-deoxy-D-manno-octulosonate biosynthesis; CMP-3-deoxy-D-manno-octulosonate from 3-deoxy-D-manno-octulosonate and CTP: step 1/1. Its pathway is bacterial outer membrane biogenesis; lipopolysaccharide biosynthesis. Functionally, activates KDO (a required 8-carbon sugar) for incorporation into bacterial lipopolysaccharide in Gram-negative bacteria. This chain is 3-deoxy-manno-octulosonate cytidylyltransferase, found in Bordetella avium (strain 197N).